Consider the following 401-residue polypeptide: Serine--glyoxylate aminotransferase (401 aa).

Residue M1 is modified to N-acetylmethionine. Pyridoxal 5'-phosphate-binding positions include 68–70 (TGT), T148, and 200–201 (QK). A 3-hydroxypyruvate-binding site is contributed by K201. Position 201 is an N6-(pyridoxal phosphate)lysine (K201). Position 204 is a phosphoserine (S204). R347 contributes to the 3-hydroxypyruvate binding site. Residues 399-401 (SRI) carry the Microbody targeting signal motif.

This sequence belongs to the class-V pyridoxal-phosphate-dependent aminotransferase family. In terms of assembly, forms homodimers. Interacts with RABGAP22. Requires pyridoxal 5'-phosphate as cofactor. In terms of tissue distribution, widely expressed. Preferentially expressed in green, leafy tissues, root cortex and epidermis, developing siliques and dry seeds.

It localises to the peroxisome. The enzyme catalyses glyoxylate + L-serine = 3-hydroxypyruvate + glycine. The catalysed reaction is glyoxylate + L-alanine = glycine + pyruvate. It carries out the reaction L-serine + pyruvate = 3-hydroxypyruvate + L-alanine. It catalyses the reaction 3-hydroxypyruvate + L-asparagine = 2-oxosuccinamate + L-serine. The enzyme catalyses L-asparagine + glyoxylate = 2-oxosuccinamate + glycine. The catalysed reaction is L-asparagine + pyruvate = 2-oxosuccinamate + L-alanine. Its activity is regulated as follows. Inhibited by aminooxyacetate and beta-chloro-L-alanine, but not by p-hydroxymercuribenzoate. Functionally, photorespiratory enzyme that catalyzes transamination reactions with multiple substrates, including asparagine. Functions exclusively as a catabolic enzyme in Asn metabolism. Involved in root development during seedling establishment after seed germination by regulating serine homeostasis and acetate conversion. This Arabidopsis thaliana (Mouse-ear cress) protein is Serine--glyoxylate aminotransferase.